We begin with the raw amino-acid sequence, 124 residues long: UPF0375 protein Y45F10C.4 (124 aa).

Positions 1-23 (MNFLPSTVLLLSFVVAIISGSFS) are cleaved as a signal peptide. N-linked (GlcNAc...) asparagine glycosylation is found at Asn36 and Asn62.

Belongs to the UPF0375 family.

Its subcellular location is the secreted. This is UPF0375 protein Y45F10C.4 from Caenorhabditis elegans.